The primary structure comprises 197 residues: Large ribosomal subunit protein bL9 (197 aa).

A disordered region spans residues 178–197 (GEFFDPEAQEDEAAAGETAQ). Positions 181–191 (FDPEAQEDEAA) are enriched in acidic residues.

This sequence belongs to the bacterial ribosomal protein bL9 family.

In terms of biological role, binds to the 23S rRNA. The sequence is that of Large ribosomal subunit protein bL9 from Bradyrhizobium sp. (strain BTAi1 / ATCC BAA-1182).